A 137-amino-acid chain; its full sequence is ATP synthase epsilon chain (137 aa).

It belongs to the ATPase epsilon chain family. F-type ATPases have 2 components, CF(1) - the catalytic core - and CF(0) - the membrane proton channel. CF(1) has five subunits: alpha(3), beta(3), gamma(1), delta(1), epsilon(1). CF(0) has three main subunits: a, b and c.

The protein localises to the cellular thylakoid membrane. Functionally, produces ATP from ADP in the presence of a proton gradient across the membrane. The chain is ATP synthase epsilon chain (atpC) from Nostoc sp. (strain PCC 7120 / SAG 25.82 / UTEX 2576).